The chain runs to 65 residues: UPF0434 protein RPB_0294 (65 aa).

This sequence belongs to the UPF0434 family.

In Rhodopseudomonas palustris (strain HaA2), this protein is UPF0434 protein RPB_0294.